The chain runs to 196 residues: Adenylate kinase (196 aa).

9–17 is an ATP binding site; the sequence is GIPGVGKST.

It belongs to the archaeal adenylate kinase family.

The protein localises to the cytoplasm. The catalysed reaction is AMP + ATP = 2 ADP. The polypeptide is Adenylate kinase (Thermococcus onnurineus (strain NA1)).